We begin with the raw amino-acid sequence, 393 residues long: Xyloside xylosyltransferase 1 (393 aa).

Residues 1–23 (MGLLRGGLPCARAMARLGAVRSH) are Cytoplasmic-facing. Residues 24–44 (YCALLLAAALAVCAFYYLGSG) traverse the membrane as a helical; Signal-anchor for type II membrane protein segment. Residues 45–393 (RETFSSATKR…GNCNTPIPED (349 aa)) lie on the Lumenal side of the membrane. 104–106 (MFT) lines the UDP-alpha-D-xylose pocket. Residue D226 coordinates Mn(2+). L227 contributes to the UDP-alpha-D-xylose binding site. D228 is a Mn(2+) binding site. An interaction with target proteins region spans residues 263 to 266 (HTFW). UDP-alpha-D-xylose contacts are provided by S290, L328, and Q331. Residues Q331 and W360 each contribute to the a glycoprotein site. 2 disulfides stabilise this stretch: C350-C375 and C357-C386. H383 contributes to the Mn(2+) binding site. Residue N385 participates in a glycoprotein binding.

Belongs to the glycosyltransferase 8 family. Homodimer. Dimer formation may be essential for the retention in endoplasmic reticulum. Mg(2+) serves as cofactor. Requires Mn(2+) as cofactor.

The protein resides in the endoplasmic reticulum membrane. The catalysed reaction is 3-O-[alpha-D-xylosyl-(1-&gt;3)-beta-D-glucosyl]-L-seryl-[EGF-like domain protein] + UDP-alpha-D-xylose = 3-O-[alpha-D-xylosyl-(1-&gt;3)-alpha-D-xylosyl-(1-&gt;3)-beta-D-glucosyl]-L-seryl-[EGF-like domain protein] + UDP + H(+). Functionally, alpha-1,3-xylosyltransferase, which elongates the O-linked xylose-glucose disaccharide attached to EGF-like repeats in the extracellular domain of target proteins by catalyzing the addition of the second xylose. Known targets include Notch proteins and coagulation factors, such as F9. This chain is Xyloside xylosyltransferase 1 (XXYLT1), found in Homo sapiens (Human).